The chain runs to 404 residues: MTPMKRSVQTQVSEPFTESWGEESLPELPTEQSLTEYSDLKEAPSAHTLYVGHLNPQFSVPVLACLLRDTLERLEMPVAREHIEVVRRPRKAYALVQVTVRRDTLASLPWRLQTALEEHLILKELAARGKELLLSEAQGPLSHREEEEEDSGLSPGPNPGSGVPLPAWPTHTLPDRPQAWQLQSCQGRPSGVCSDSAIVHHEIVGKDQLFQGAFLGSETRNMEFKRGSGEYLSLAFKHHVRRYVCAFLNSEGGSLLVGVEDSGLVRGIRCSHRDEDRARLLVDSILQGFKPQVFPDAYTLTFVPVISTSETNVPLKVIRLTVHTPKAQSQPQLYQTDQGEVFLRRDGSIQGPLSASAIQEWCRQRWLVELGKLEERVKVLTMEKEQLQQQLQQHGPMSCTCCVL.

Disordered regions lie at residues Met1 to Glu31 and Gly139 to Thr170. The segment covering Ser7 to Phe16 has biased composition (polar residues). Over residues Gly152–Leu165 the composition is skewed to low complexity. ATP is bound at residue Gly258 to Val265. The stretch at Arg365–Gly395 forms a coiled coil.

It belongs to the Schlafen family. Subgroup I subfamily.

The protein is Schlafen-like protein 1 (SLFNL1) of Macaca fascicularis (Crab-eating macaque).